The primary structure comprises 688 residues: MSKELKLFRNFGIMAHIDAGKTTTSERILYHTGKNHKIGETHDGAATMDWMAQEKERGITITSAATYAKWKGHSLNLIDTPGHVDFTVEVERSLRVLDGAVAVLDGQNGVEPQTETVWRQATKYNVPRIVFVNKMDKTGADFYYSIETMKNRLGVKATAIQIPIGAEADFVGSIDLIEMKAYIYDGQADEEYKIEDIPADYVTKAQVMRSQMIDDVAIFDDEVMEKYLSGEELSHEDIKKCIRKGVISTELYPVLCGTAFKNKGVKKLLDAVVDFLPSPIDVPPIKGVDDHGNPIEYHNDPSEPFAALAFKVATDPFVGRLTYIRVYSGKLDKGTYVYNATKDKKERISRLVKMHSNNRDEIDSISAGDICAVIGLKDTTTGDTICDEKKPVILEQMVFAEPVISLSVEPKTKADQEKMSLALSKLAEEDPTFRTYTNEETGQTIIAGMGELHLDVLVDRMRREFNVQVNVGAPQVSYRETFTEIADAEGKYIKQSGGRGQYGHVWIKFEPNHDKGFEFVDNIVGGKVPKEYIKEVENGLIEALTSGPIAGYQTIDVKATIFDGSYHDVDSSGMAYKIAASLAFKEAAKVCKPVLLEPIMSVDVTTPDDYFGTVMGDISKRRGVIEGQEQRGNAQAIKAKVPLSEMFGYATDLRSNTQGRGQYIMQFSHYAQAPKSVTEEVMAARAKK.

The region spanning K6 to I280 is the tr-type G domain. Residues A15–T22, D79–H83, and N133–D136 each bind GTP.

Belongs to the TRAFAC class translation factor GTPase superfamily. Classic translation factor GTPase family. EF-G/EF-2 subfamily.

It localises to the cytoplasm. Its function is as follows. Catalyzes the GTP-dependent ribosomal translocation step during translation elongation. During this step, the ribosome changes from the pre-translocational (PRE) to the post-translocational (POST) state as the newly formed A-site-bound peptidyl-tRNA and P-site-bound deacylated tRNA move to the P and E sites, respectively. Catalyzes the coordinated movement of the two tRNA molecules, the mRNA and conformational changes in the ribosome. The protein is Elongation factor G of Ureaplasma urealyticum serovar 10 (strain ATCC 33699 / Western).